An 82-amino-acid chain; its full sequence is Large ribosomal subunit protein bL31B (82 aa).

It belongs to the bacterial ribosomal protein bL31 family. Type B subfamily. In terms of assembly, part of the 50S ribosomal subunit after the end of exponential growth.

In terms of biological role, while neither of the L31 paralogs is essential, this protein does not seem to function as the main L31 protein. Has a higher affinity for 70S ribosomes than the zinc-containing L31 paralog; is able to displace it to varying extents, even under zinc-replete conditions. This chain is Large ribosomal subunit protein bL31B (rpmE2), found in Bacillus subtilis (strain 168).